The chain runs to 160 residues: MKTKMITREGYNKLKQELDYLWKEHRPEITQKVSWAASLGDRSENADYTYNKRLLRQIDRRVRFLSKFLPEVKIVDYAPQQEGKVFFGAWVEIENEAGEVMKFRIVGPEEIYGDAKGYISIDSPMARALLKKEVDDEVQVPTPSGIKEWFINSIEYDKGE.

This sequence belongs to the GreA/GreB family. GreB subfamily.

Functionally, necessary for efficient RNA polymerase transcription elongation past template-encoded arresting sites. The arresting sites in DNA have the property of trapping a certain fraction of elongating RNA polymerases that pass through, resulting in locked ternary complexes. Cleavage of the nascent transcript by cleavage factors such as GreA or GreB allows the resumption of elongation from the new 3'terminus. GreB releases sequences of up to 9 nucleotides in length. In Vibrio vulnificus (strain CMCP6), this protein is Transcription elongation factor GreB.